The sequence spans 434 residues: Histidinol dehydrogenase (434 aa).

3 residues coordinate NAD(+): Tyr-130, Gln-188, and Asn-211. Substrate-binding residues include Ser-237, Gln-259, and His-262. Zn(2+) is bound by residues Gln-259 and His-262. Catalysis depends on proton acceptor residues Glu-326 and His-327. Substrate contacts are provided by His-327, Asp-360, Glu-414, and His-419. Asp-360 is a binding site for Zn(2+). Zn(2+) is bound at residue His-419.

This sequence belongs to the histidinol dehydrogenase family. As to quaternary structure, homodimer. It depends on Zn(2+) as a cofactor.

It catalyses the reaction L-histidinol + 2 NAD(+) + H2O = L-histidine + 2 NADH + 3 H(+). It participates in amino-acid biosynthesis; L-histidine biosynthesis; L-histidine from 5-phospho-alpha-D-ribose 1-diphosphate: step 9/9. Catalyzes the sequential NAD-dependent oxidations of L-histidinol to L-histidinaldehyde and then to L-histidine. The polypeptide is Histidinol dehydrogenase (Escherichia coli O157:H7).